The chain runs to 582 residues: SHC-transforming protein 2 (582 aa).

Disordered stretches follow at residues M1–T24 and G47–G70. Pro residues predominate over residues R8 to E20. Positions L147–D329 constitute a PID domain. Positions E330–P486 are CH1. A phosphotyrosine mark is found at Y338, Y339, and Y414. The disordered stretch occupies residues P460–Q481. The SH2 domain maps to W487–V578.

As to quaternary structure, interacts with the Trk receptors in a phosphotyrosine-dependent manner and MEGF12. Once activated, binds to GRB2. In terms of processing, phosphorylated on tyrosines by the Trk receptors. Expressed in brain. Expressed at high level in the hypothalamus and at low level in the caudate nucleus.

Signaling adapter that couples activated growth factor receptors to signaling pathway in neurons. Involved in the signal transduction pathways of neurotrophin-activated Trk receptors in cortical neurons. The sequence is that of SHC-transforming protein 2 (SHC2) from Homo sapiens (Human).